A 63-amino-acid chain; its full sequence is Large ribosomal subunit protein uL30 (63 aa).

Belongs to the universal ribosomal protein uL30 family. In terms of assembly, part of the 50S ribosomal subunit.

This is Large ribosomal subunit protein uL30 from Rickettsia prowazekii (strain Madrid E).